Consider the following 426-residue polypeptide: MPLSYLDKNPVIDSKKHALRKKLFLSCAYFGLSLACLSSNAWASVEPLSVNGNKIYAGEKAKSFAGNSLFWSNNGWGGEKFYTADTVASLKKDWKSSIVRAAMGVQESGGYLQDPAGNKAKVERVVDAAIANDMYAIIGWHSHSAENNRSEAIRFFQEMARKYGNKPNVIYEIYNEPLQVSWSNTIKPYAEAVISAIRAIDPDNLIIVGTPSWSQNVDEASRDPINAKNIAYTLHFYAGTHGESLRNKARQALNNGIALFVTEWGTVNADGNGGVNQTETDAWVTFMRDNNISNANWALNDKNEGASTYYPDSKNLTESGKKVKSIIQSWPYKAGSAASATTDPSTDTTTDTTVDEPTTTDTPATADCANANVYPNWVSKDWAGGQPTHNEAGQSIVYKGNLYTANWYTASVPGSDSSWTQVGSCN.

The first 43 residues, 1–43 (MPLSYLDKNPVIDSKKHALRKKLFLSCAYFGLSLACLSSNAWA), serve as a signal peptide directing secretion. Positions 44-332 (SVEPLSVNGN…VKSIIQSWPY (289 aa)) are catalytic. The active-site Proton donor is Glu176. Glu263 serves as the catalytic Nucleophile. A linker region spans residues 333-366 (KAGSAASATTDPSTDTTTDTTVDEPTTTDTPATA). Residues 336–367 (SAASATTDPSTDTTTDTTVDEPTTTDTPATAD) are disordered. Positions 367 to 426 (DCANANVYPNWVSKDWAGGQPTHNEAGQSIVYKGNLYTANWYTASVPGSDSSWTQVGSCN) are cellulose-binding. Cysteines 368 and 425 form a disulfide.

The protein belongs to the glycosyl hydrolase 5 (cellulase A) family.

It is found in the secreted. It catalyses the reaction Endohydrolysis of (1-&gt;4)-beta-D-glucosidic linkages in cellulose, lichenin and cereal beta-D-glucans.. Its function is as follows. Represents 97% of the global cellulase activity. In Dickeya dadantii (strain 3937) (Erwinia chrysanthemi (strain 3937)), this protein is Endoglucanase Z (celZ).